The chain runs to 354 residues: Serum paraoxonase/arylesterase 2 (354 aa).

Cys-42 and Cys-352 are disulfide-bonded. Ca(2+) contacts are provided by Glu-53 and Asp-54. The active-site Proton acceptor is the His-114. The Ca(2+) site is built by Ile-116, Asn-167, Asp-168, and Asn-223. An N-linked (GlcNAc...) asparagine glycan is attached at Asn-254. Residues Asp-268 and Asn-269 each coordinate Ca(2+). Residues Asn-269 and Asn-323 are each glycosylated (N-linked (GlcNAc...) asparagine).

The protein belongs to the paraoxonase family. As to quaternary structure, homotrimer. Ca(2+) serves as cofactor. In terms of processing, glycosylated. Post-translationally, the signal sequence is not cleaved.

It localises to the membrane. It catalyses the reaction a phenyl acetate + H2O = a phenol + acetate + H(+). It carries out the reaction an N-acyl-L-homoserine lactone + H2O = an N-acyl-L-homoserine + H(+). Functionally, capable of hydrolyzing lactones and a number of aromatic carboxylic acid esters. The polypeptide is Serum paraoxonase/arylesterase 2 (PON2) (Bos taurus (Bovine)).